Consider the following 484-residue polypeptide: ATP synthase subunit beta (484 aa).

162 to 169 (GGAGVGKT) is an ATP binding site.

The protein belongs to the ATPase alpha/beta chains family. In terms of assembly, F-type ATPases have 2 components, CF(1) - the catalytic core - and CF(0) - the membrane proton channel. CF(1) has five subunits: alpha(3), beta(3), gamma(1), delta(1), epsilon(1). CF(0) has four main subunits: a(1), b(1), b'(1) and c(9-12).

The protein resides in the cellular thylakoid membrane. The enzyme catalyses ATP + H2O + 4 H(+)(in) = ADP + phosphate + 5 H(+)(out). Its function is as follows. Produces ATP from ADP in the presence of a proton gradient across the membrane. The catalytic sites are hosted primarily by the beta subunits. The chain is ATP synthase subunit beta from Synechococcus elongatus (strain ATCC 33912 / PCC 7942 / FACHB-805) (Anacystis nidulans R2).